The following is a 100-amino-acid chain: Small ubiquitin-related modifier 1 (100 aa).

The segment covering 1–12 (MSAAGEEDKKPA) has biased composition (basic and acidic residues). The tract at residues 1–23 (MSAAGEEDKKPAGGEGGGAHINL) is disordered. One can recognise a Ubiquitin-like domain in the interval 19–96 (AHINLKVKGQ…IDAMLHQTGG (78 aa)). Gly-96 participates in a covalent cross-link: Glycyl lysine isopeptide (Gly-Lys) (interchain with K-? in acceptor proteins).

It belongs to the ubiquitin family. SUMO subfamily. As to quaternary structure, interacts with SAE2, SCE1 and SIZ1. Covalently attached to a number of proteins.

It is found in the nucleus. The protein resides in the cytoplasm. Functionally, ubiquitin-like protein which can be covalently attached to target lysines as a monomer. Does not seem to be involved in protein degradation and may function as an antagonist of ubiquitin in the degradation process. This is Small ubiquitin-related modifier 1 (SUMO1) from Oryza sativa subsp. japonica (Rice).